The chain runs to 243 residues: GTP cyclohydrolase 1 type 2 (243 aa).

5 residues coordinate a divalent metal cation: H63, H64, D102, H209, and E213.

This sequence belongs to the GTP cyclohydrolase I type 2/NIF3 family. As to quaternary structure, homohexamer.

The enzyme catalyses GTP + H2O = 7,8-dihydroneopterin 3'-triphosphate + formate + H(+). Its pathway is cofactor biosynthesis; 7,8-dihydroneopterin triphosphate biosynthesis; 7,8-dihydroneopterin triphosphate from GTP: step 1/1. In terms of biological role, converts GTP to dihydroneopterin triphosphate. Is not active with GDP, GMP, ATP, CTP or UTP as substrate. The chain is GTP cyclohydrolase 1 type 2 from Helicobacter pylori (strain ATCC 700392 / 26695) (Campylobacter pylori).